Here is a 660-residue protein sequence, read N- to C-terminus: GRIP and coiled-coil domain-containing protein 2 (660 aa).

A disordered region spans residues Met-1–Pro-28. Coiled coils occupy residues Glu-30–Asn-92, Glu-115–Ala-464, and Asp-517–Lys-596. Residues Glu-585–Ala-636 form the GRIP domain.

The chain is GRIP and coiled-coil domain-containing protein 2 from Caenorhabditis elegans.